The sequence spans 619 residues: MSLDIAKYPTLALAENPEELRMLPKESLPKLCDELRQYLLTCVSRSSGHFASGLGVVELTVALHYVYNTPFDHLIWDVGHQAYPHKILTGRRDRISTIRQKDGLHPFPWRGESEYDVLSVGHSSTSISAGLGMAVAAEREGKGRRTVCVIGDGAITAGMAFEAMSHAGDIHSDMLVILNDNEMSISENVGGLNNHLAQLLSGKLYASLREGGKKAFSALPPIKDLLKRTEEHLKGMVVPSTLFEELGFNYIGPVDGHDVHTLTQTLKNMRDLKGPQLLHIMTKKGKGYAPAEKDPIGWHAVPKFDPASGTLPKSQSSLPTYSKIFGEWLCETAAKDSKLMAVTPAMREGSGMVRFSREYPQQYFDVAIAEQHAVTFAAGLAIGGYKPVVAIYSTFLQRAYDQLIHDVAIQNLPVLFAIDRGGLVGADGQTHQGAFDLSFMRCIPNMVIMAPSDENECRQMLYTGYHHNGPAAVRYPRGNGTGAVLEPLEMLPIGKGVLRREGEKIAILCFGTLLAQAQLAAENLNATLVDMRFVKPLDEELVLEMAAKHQVLVTVEENAIMGGAGSGVNELLMAKRRWVPVLNIGLPDLFVPQGEQDEMRSELGLDAAGIQRQIEAWLA.

Thiamine diphosphate contacts are provided by residues His-80 and 121–123 (GHS). Asp-152 lines the Mg(2+) pocket. Thiamine diphosphate-binding positions include 153-154 (GA), Asn-181, Tyr-288, and Glu-370. Asn-181 is a Mg(2+) binding site.

Belongs to the transketolase family. DXPS subfamily. Homodimer. It depends on Mg(2+) as a cofactor. Thiamine diphosphate serves as cofactor.

It carries out the reaction D-glyceraldehyde 3-phosphate + pyruvate + H(+) = 1-deoxy-D-xylulose 5-phosphate + CO2. It participates in metabolic intermediate biosynthesis; 1-deoxy-D-xylulose 5-phosphate biosynthesis; 1-deoxy-D-xylulose 5-phosphate from D-glyceraldehyde 3-phosphate and pyruvate: step 1/1. Catalyzes the acyloin condensation reaction between C atoms 2 and 3 of pyruvate and glyceraldehyde 3-phosphate to yield 1-deoxy-D-xylulose-5-phosphate (DXP). In Yersinia pseudotuberculosis serotype I (strain IP32953), this protein is 1-deoxy-D-xylulose-5-phosphate synthase.